We begin with the raw amino-acid sequence, 791 residues long: Penicillin-binding protein 1A (791 aa).

The Cytoplasmic segment spans residues 1–6; it reads MYKSLF. A helical; Signal-anchor for type II membrane protein transmembrane segment spans residues 7 to 27; the sequence is FCLKILALLFLIGCGIVAYII. Residues 28-791 lie on the Periplasmic side of the membrane; it reads YYYSRDLPDY…TEKDQSQEIY (764 aa). The segment at 49–220 is transglycosylase; the sequence is TRIYSRDGKL…SELNPEKNYA (172 aa). Residue Glu-87 is the Proton donor; for transglycosylase activity of the active site. The segment at 398–711 is transpeptidase; sequence DVIVVEPVKD…SSVVLPIFID (314 aa). Ser-457 functions as the Acyl-ester intermediate; for transpeptidase activity in the catalytic mechanism.

The protein in the N-terminal section; belongs to the glycosyltransferase 51 family. This sequence in the C-terminal section; belongs to the transpeptidase family.

The protein resides in the cell inner membrane. The catalysed reaction is [GlcNAc-(1-&gt;4)-Mur2Ac(oyl-L-Ala-gamma-D-Glu-L-Lys-D-Ala-D-Ala)](n)-di-trans,octa-cis-undecaprenyl diphosphate + beta-D-GlcNAc-(1-&gt;4)-Mur2Ac(oyl-L-Ala-gamma-D-Glu-L-Lys-D-Ala-D-Ala)-di-trans,octa-cis-undecaprenyl diphosphate = [GlcNAc-(1-&gt;4)-Mur2Ac(oyl-L-Ala-gamma-D-Glu-L-Lys-D-Ala-D-Ala)](n+1)-di-trans,octa-cis-undecaprenyl diphosphate + di-trans,octa-cis-undecaprenyl diphosphate + H(+). The enzyme catalyses Preferential cleavage: (Ac)2-L-Lys-D-Ala-|-D-Ala. Also transpeptidation of peptidyl-alanyl moieties that are N-acyl substituents of D-alanine.. The protein operates within cell wall biogenesis; peptidoglycan biosynthesis. In terms of biological role, cell wall formation. Synthesis of cross-linked peptidoglycan from the lipid intermediates. The enzyme has a penicillin-insensitive transglycosylase N-terminal domain (formation of linear glycan strands) and a penicillin-sensitive transpeptidase C-terminal domain (cross-linking of the peptide subunits). This is Penicillin-binding protein 1A (mrcA) from Rickettsia bellii (strain RML369-C).